A 6713-amino-acid chain; its full sequence is Extracellular matrix-binding protein EbhA (6713 aa).

44 FIVAR domains span residues 1 to 58 (MGNL…VEQA), 126 to 184 (AMGQ…VTAA), 252 to 310 (AMKG…ITQA), 378 to 436 (QMGN…VEAA), 504 to 562 (AMAN…VENA), 630 to 688 (AMGT…INQI), 756 to 814 (AMGQ…VDRA), 882 to 940 (AMNS…VDNA), 1008 to 1066 (AMGA…INDM), 1134 to 1192 (AMTA…VNSA), 1260 to 1318 (AMKG…ITQA), 1386 to 1444 (AMHS…VEQA), 1512 to 1570 (AMGQ…VERA), 1638 to 1696 (AMTA…VTNA), 1764 to 1822 (AMKG…INQA), 1890 to 1948 (AMTN…VETA), 2142 to 2200 (AMNQ…INQK), 2268 to 2325 (AMGN…VQAA), 2393 to 2451 (AMGQ…VEAA), 2519 to 2577 (AMQR…VEQA), 2645 to 2703 (AMDQ…VTAA), 2771 to 2829 (AMNQ…VTQA), 2897 to 2955 (AMER…VEAA), 3023 to 3081 (AMGN…VEAA), 3149 to 3207 (AMDK…INQA), 3275 to 3333 (AMGN…VEQA), 3401 to 3459 (AMTQ…ITAA), 3527 to 3585 (AMTQ…IQQA), 3653 to 3711 (AMTN…VEQA), 3779 to 3837 (AMTQ…VAQA), 3905 to 3963 (AMGT…VTKA), 4031 to 4089 (AMGN…ITRA), 4157 to 4218 (AMDQ…ITNE), 4283 to 4341 (AMEL…VNGA), 4409 to 4467 (AMGN…VEQA), 4535 to 4592 (AMHG…INQV), 4660 to 4718 (LMDA…VSSA), 4786 to 4844 (AMKA…IDQA), 4912 to 4970 (AMEA…VEQL), 5038 to 5096 (AMQA…VEQL), 5164 to 5222 (AMET…VEQA), 5290 to 5344 (SMDQ…VDQA), 5412 to 5471 (AMDQ…VIKL), and 5666 to 5722 (AMET…INGA). A helical membrane pass occupies residues 6518–6540 (VIKNAIGVVGISGLLASFWFFIA). Residues 6616-6713 (RRKEDEEDVE…KKKKSKKNKK (98 aa)) form a disordered region. Basic and acidic residues-rich tracts occupy residues 6631–6641 (TDEKVLKDNEH) and 6680–6690 (QKDNQSKDKKS). The segment covering 6695–6713 (TSKKVAAKKKKKKSKKNKK) has biased composition (basic residues).

It localises to the cell membrane. The sequence is that of Extracellular matrix-binding protein EbhA (ebhA) from Staphylococcus aureus (strain Mu3 / ATCC 700698).